A 234-amino-acid polypeptide reads, in one-letter code: MNDNNVIFDQRSDGLNAFFSKIYALMGAGVLVSALVSWIMITFFLDNMTAILQSGSLFFLVLWIIPLVMVVSLQGLAMKNSKMALPIFIGYAAFMGFLISFTLLMYTATDITLAFVTAAAMFFGLSVYGRFTKRNLSAMGKAFGVAVWGLIIAMFLNFFFASTGLTILISLVGVVIFAGLIAWDNQKITQVYNANNGQVSDGWAISMALSLYLDFINMFLFLLRLFGIAGGNRD.

Transmembrane regions (helical) follow at residues 25 to 45, 57 to 77, 85 to 105, 108 to 128, 142 to 162, 163 to 183, and 203 to 223; these read LMGA…TFFL, LFFL…QGLA, LPIF…TLLM, ATDI…LSVY, AFGV…FFAS, TGLT…LIAW, and WAIS…LFLL.

The protein belongs to the BI1 family.

Its subcellular location is the cell membrane. This is an uncharacterized protein from Lactococcus lactis subsp. lactis (strain IL1403) (Streptococcus lactis).